The chain runs to 401 residues: Enoyl-[acyl-carrier-protein] reductase [NADH] 1 (401 aa).

NAD(+) contacts are provided by residues 48–53, 74–75, 111–112, and 139–140; these read GSSSGY, FE, DA, and LA. A substrate-binding site is contributed by Tyr-225. The active-site Proton donor is Tyr-235. Residues Lys-244 and 273–275 each bind NAD(+); that span reads VVT.

This sequence belongs to the TER reductase family. As to quaternary structure, monomer.

The enzyme catalyses a 2,3-saturated acyl-[ACP] + NAD(+) = a (2E)-enoyl-[ACP] + NADH + H(+). It catalyses the reaction a 2,3-saturated acyl-CoA + NAD(+) = a (2E)-enoyl-CoA + NADH + H(+). The catalysed reaction is (2E)-butenoyl-[ACP] + NADH + H(+) = butanoyl-[ACP] + NAD(+). It carries out the reaction butanoyl-CoA + NAD(+) = (2E)-butenoyl-CoA + NADH + H(+). Its pathway is lipid metabolism; fatty acid biosynthesis. Weakly inhibited by triclosan. In terms of biological role, involved in the final reduction of the elongation cycle of fatty acid synthesis (FAS II). Catalyzes the NADH-dependent reduction of a carbon-carbon double bond in an enoyl moiety that is covalently linked to an acyl carrier protein (ACP). It can use both crotonyl-CoA and crotonyl-ACP. The chain is Enoyl-[acyl-carrier-protein] reductase [NADH] 1 from Vibrio cholerae serotype O1 (strain ATCC 39315 / El Tor Inaba N16961).